We begin with the raw amino-acid sequence, 86 residues long: Small ribosomal subunit protein bS16 (86 aa).

Belongs to the bacterial ribosomal protein bS16 family.

The chain is Small ribosomal subunit protein bS16 from Leptothrix cholodnii (strain ATCC 51168 / LMG 8142 / SP-6) (Leptothrix discophora (strain SP-6)).